A 253-amino-acid polypeptide reads, in one-letter code: E3 ubiquitin-protein ligase MARCHF3 (253 aa).

Residues S63 to E123 form an RING-CH-type zinc finger. Positions 71, 74, 87, 89, 97, 100, 113, and 116 each coordinate Zn(2+). Transmembrane regions (helical) follow at residues L145–L165 and A182–V202. A phosphoserine mark is found at S237 and S243.

As to quaternary structure, interacts with MARCHF2 and STX6.

The protein resides in the cytoplasmic vesicle membrane. It is found in the early endosome membrane. The catalysed reaction is S-ubiquitinyl-[E2 ubiquitin-conjugating enzyme]-L-cysteine + [acceptor protein]-L-lysine = [E2 ubiquitin-conjugating enzyme]-L-cysteine + N(6)-ubiquitinyl-[acceptor protein]-L-lysine.. Its pathway is protein modification; protein ubiquitination. E3 ubiquitin-protein ligase which may be involved in endosomal trafficking. E3 ubiquitin ligases accept ubiquitin from an E2 ubiquitin-conjugating enzyme in the form of a thioester and then directly transfer the ubiquitin to targeted substrates. This Homo sapiens (Human) protein is E3 ubiquitin-protein ligase MARCHF3.